Here is a 167-residue protein sequence, read N- to C-terminus: MANHPLTLEKDGFIVTTLDAAMAAAQKNSLWYMTFGLARCAVEMMHAAGARYDMDRFGMIPRASPRQCDLMIVAGTLTNKMAPAMRRVYDQMAEPRYVVSMGSCANGGGYYHYGYSVVRGCDRIVPVDVYVPGCPPTAEALVYDLMQLQRKVAERSTHSRPKLFARP.

This sequence belongs to the complex I 20 kDa subunit family. As to quaternary structure, NDH-1 is composed of 14 different subunits. Subunits NuoB, C, D, E, F, and G constitute the peripheral sector of the complex.

It is found in the cell inner membrane. The catalysed reaction is a quinone + NADH + 5 H(+)(in) = a quinol + NAD(+) + 4 H(+)(out). NDH-1 shuttles electrons from NADH, via FMN and iron-sulfur (Fe-S) centers, to quinones in the respiratory chain. Couples the redox reaction to proton translocation (for every two electrons transferred, four hydrogen ions are translocated across the cytoplasmic membrane), and thus conserves the redox energy in a proton gradient. This Burkholderia pseudomallei (strain 1710b) protein is Putative NADH-quinone oxidoreductase subunit B 2.